We begin with the raw amino-acid sequence, 225 residues long: Biosynthetic peptidoglycan transglycosylase (225 aa).

Residues 12-32 (IWFVAWRFLLLFVIVLFLFRF) traverse the membrane as a helical segment.

This sequence belongs to the glycosyltransferase 51 family.

It localises to the cell inner membrane. The catalysed reaction is [GlcNAc-(1-&gt;4)-Mur2Ac(oyl-L-Ala-gamma-D-Glu-L-Lys-D-Ala-D-Ala)](n)-di-trans,octa-cis-undecaprenyl diphosphate + beta-D-GlcNAc-(1-&gt;4)-Mur2Ac(oyl-L-Ala-gamma-D-Glu-L-Lys-D-Ala-D-Ala)-di-trans,octa-cis-undecaprenyl diphosphate = [GlcNAc-(1-&gt;4)-Mur2Ac(oyl-L-Ala-gamma-D-Glu-L-Lys-D-Ala-D-Ala)](n+1)-di-trans,octa-cis-undecaprenyl diphosphate + di-trans,octa-cis-undecaprenyl diphosphate + H(+). It functions in the pathway cell wall biogenesis; peptidoglycan biosynthesis. In terms of biological role, peptidoglycan polymerase that catalyzes glycan chain elongation from lipid-linked precursors. The sequence is that of Biosynthetic peptidoglycan transglycosylase from Marinomonas sp. (strain MWYL1).